The following is a 416-amino-acid chain: Enterobactin exporter EntS (416 aa).

Residues 1 to 21 are Cytoplasmic-facing; sequence MNKQSWLLNLSLLKTHPAFRA. Residues 22 to 42 form a helical membrane-spanning segment; the sequence is VFLARFISIVSLGLLGVAVPV. Over 43–55 the chain is Periplasmic; sequence QIQMMTHSTWQVG. A helical transmembrane segment spans residues 56 to 76; the sequence is LSVTLTGGAMFVGLMVGGVLA. Over 77–83 the chain is Cytoplasmic; sequence DRYERKK. The chain crosses the membrane as a helical span at residues 84–104; that stretch reads VILLARGTCGIGFIGLCLNAL. Topologically, residues 105 to 109 are periplasmic; it reads LPEPS. Residues 110 to 130 form a helical membrane-spanning segment; the sequence is LLAIYLLGLWDGFFASLGVTA. At 131-156 the chain is on the cytoplasmic side; the sequence is LLAATPALVGRENLMQAGAITMLTVR. Residues 157–177 form a helical membrane-spanning segment; that stretch reads LGSVISPMIGGLLLATGGVAW. A topological domain (periplasmic) is located at residue asparagine 178. The helical transmembrane segment at 179–199 threads the bilayer; that stretch reads YGLAAAGTFITLLPLLSLPAL. Residues 200-218 are Cytoplasmic-facing; it reads PPPPQPREHPLKSLLAGFR. Residues 219–239 form a helical membrane-spanning segment; that stretch reads FLLASPLVGGIALLGGLLTMA. The Periplasmic segment spans residues 240 to 256; sequence SAVRVLYPALADNWQMS. Residues 257 to 277 form a helical membrane-spanning segment; it reads AAQIGFLYAAIPLGAAIGALT. Residues 278–287 are Cytoplasmic-facing; that stretch reads SGKLAHSARP. The chain crosses the membrane as a helical span at residues 288–307; the sequence is GLLMLLSTLGSFLAIGLFGL. The Periplasmic segment spans residues 308–313; the sequence is MPMWIL. A helical transmembrane segment spans residues 314 to 336; that stretch reads GVICLALFGWLSAVSSLLQYTML. Residues 337–356 are Cytoplasmic-facing; that stretch reads QTQTPEAMLGRINGLWTAQN. A helical membrane pass occupies residues 357-377; the sequence is VTGDAIGAALLGGLGAMMTPV. Alanine 378 is a topological domain (periplasmic). Residues 379–399 traverse the membrane as a helical segment; it reads SASASGFGLLIIGVLLLLVLV. Residues 400-416 are Cytoplasmic-facing; that stretch reads ELRRFRQTPPQVTASDS.

Belongs to the major facilitator superfamily. EntS (TC 2.A.1.38) family.

Its subcellular location is the cell inner membrane. In terms of biological role, component of an export pathway for enterobactin. This is Enterobactin exporter EntS from Escherichia coli O81 (strain ED1a).